A 573-amino-acid polypeptide reads, in one-letter code: PCNA-interacting partner (573 aa).

The tract at residues 492–532 (TGGQVKNKPCKNVANKRSKRKQVDIQSETTNAQENEPPQKK) is disordered. Positions 515–527 (DIQSETTNAQENE) are enriched in polar residues.

This sequence belongs to the PARI family.

The protein resides in the cytoplasm. It is found in the nucleus. In terms of biological role, required to suppress inappropriate homologous recombination, thereby playing a central role DNA repair and in the maintenance of genomic stability. This chain is PCNA-interacting partner (parpbp), found in Xenopus tropicalis (Western clawed frog).